The following is a 773-amino-acid chain: C-Maf-inducing protein (773 aa).

The segment at 1 to 30 (MDVTSSSGGGGDPRQIEETKPLLGGDVSAP) is disordered. The PH domain maps to 54–163 (LLQEGDIQVC…HSLQWKKKIY (110 aa)). Residues Ser349, Ser377, Ser382, and Ser660 each carry the phosphoserine modification. LRR repeat units lie at residues 663 to 686 (NLEN…IKLP), 687 to 707 (SLKQ…RLLS), 712 to 732 (MLQV…LALS), and 736 to 756 (SLCS…EDLK).

In terms of assembly, interacts with FLNA. In terms of tissue distribution, isoform 1 is expressed in peripheral blood mononuclear cells and kidney. Lower expression in brain and liver. Expression is down-regulated in activated cells. Isoform 2 is expressed in lymphocyte precursors, however, expression shuts down during maturation and differentiation in thymus and fetal liver.

Its subcellular location is the nucleus. The protein resides in the cytoplasm. In terms of biological role, plays a role in T-cell signaling pathway. Isoform 2 may play a role in T-helper 2 (Th2) signaling pathway and seems to represent the first proximal signaling protein that links T-cell receptor-mediated signal to the activation of c-Maf Th2 specific factor. The chain is C-Maf-inducing protein (CMIP) from Homo sapiens (Human).